Consider the following 639-residue polypeptide: ATP-dependent zinc metalloprotease FtsH (639 aa).

Topologically, residues 1–4 are cytoplasmic; sequence MNST. A helical membrane pass occupies residues 5–25; that stretch reads VKTIVFWVFILACCILLWQVF. Topologically, residues 26–104 are periplasmic; sequence QRSSNTGKEQ…TVKDNSGSPW (79 aa). The helical transmembrane segment at 105 to 125 threads the bilayer; sequence WSILIQFSPVLVLVALWFFMI. Over 126 to 639 the chain is Cytoplasmic; the sequence is RQMQSGGNKA…GLPEGSPSPA (514 aa). ATP is bound at residue 196–203; it reads GPPGTGKT. Zn(2+) is bound at residue His-418. Glu-419 is an active-site residue. Zn(2+)-binding residues include His-422 and Asp-494. The segment at 597–639 is disordered; the sequence is KDLPPLKPSGGSGTATTDDVQQVLKPSSDRGAGGLPEGSPSPA.

It in the central section; belongs to the AAA ATPase family. In the C-terminal section; belongs to the peptidase M41 family. Homohexamer. Requires Zn(2+) as cofactor.

It localises to the cell inner membrane. In terms of biological role, acts as a processive, ATP-dependent zinc metallopeptidase for both cytoplasmic and membrane proteins. Plays a role in the quality control of integral membrane proteins. The polypeptide is ATP-dependent zinc metalloprotease FtsH (Acidobacterium capsulatum (strain ATCC 51196 / DSM 11244 / BCRC 80197 / JCM 7670 / NBRC 15755 / NCIMB 13165 / 161)).